A 117-amino-acid chain; its full sequence is Large ribosomal subunit protein uL18 (117 aa).

This sequence belongs to the universal ribosomal protein uL18 family. Part of the 50S ribosomal subunit; part of the 5S rRNA/L5/L18/L25 subcomplex. Contacts the 5S and 23S rRNAs.

In terms of biological role, this is one of the proteins that bind and probably mediate the attachment of the 5S RNA into the large ribosomal subunit, where it forms part of the central protuberance. This is Large ribosomal subunit protein uL18 from Acidithiobacillus ferrooxidans (strain ATCC 23270 / DSM 14882 / CIP 104768 / NCIMB 8455) (Ferrobacillus ferrooxidans (strain ATCC 23270)).